The chain runs to 1401 residues: DNA-directed RNA polymerase subunit beta' (1401 aa).

Residues Cys-70, Cys-72, Cys-85, and Cys-88 each coordinate Zn(2+). Mg(2+) contacts are provided by Asp-460, Asp-462, and Asp-464. 4 residues coordinate Zn(2+): Cys-808, Cys-882, Cys-889, and Cys-892.

This sequence belongs to the RNA polymerase beta' chain family. As to quaternary structure, the RNAP catalytic core consists of 2 alpha, 1 beta, 1 beta' and 1 omega subunit. When a sigma factor is associated with the core the holoenzyme is formed, which can initiate transcription. It depends on Mg(2+) as a cofactor. The cofactor is Zn(2+).

The enzyme catalyses RNA(n) + a ribonucleoside 5'-triphosphate = RNA(n+1) + diphosphate. DNA-dependent RNA polymerase catalyzes the transcription of DNA into RNA using the four ribonucleoside triphosphates as substrates. This chain is DNA-directed RNA polymerase subunit beta', found in Legionella pneumophila (strain Lens).